The following is a 515-amino-acid chain: Maturase K (515 aa).

The protein belongs to the intron maturase 2 family. MatK subfamily.

The protein localises to the plastid. Its subcellular location is the chloroplast. Its function is as follows. Usually encoded in the trnK tRNA gene intron. Probably assists in splicing its own and other chloroplast group II introns. The protein is Maturase K of Trillium luteum (Yellow wakerobin).